Reading from the N-terminus, the 1433-residue chain is CAP-Gly domain-containing linker protein 1 (1433 aa).

Residues 1–51 (MSMLKPSGLKAPSKTIKHGSTLLKAPASVATAPAEKAPSSEKSSSTTTADA) form a disordered region. Residues 32-49 (APAEKAPSSEKSSSTTTA) show a composition bias toward low complexity. Positions 79–121 (GETQFAPGQWAGIVLDEPIGKNDGSVAGVRYFQCEPLRGIFTR) constitute a CAP-Gly 1 domain. The disordered stretch occupies residues 133–208 (DEANGTQTAH…VSNLSEAGSL (76 aa)). Residues 140–168 (TAHASRATSPTSTSTASAVSASPAALLPS) are compositionally biased toward low complexity. Over residues 184-204 (TPSQFSNLSKTASGSVSNLSE) the composition is skewed to polar residues. The CAP-Gly 2 domain occupies 235 to 277 (GETDFAKGEWCGVELDEPLGKNDGAVAGTRYFQCQPRYGLFAP). Residues 319-333 (SLSSVASSVSSKPSR) are compositionally biased toward low complexity. The tract at residues 319 to 338 (SLSSVASSVSSKPSRTGLLT) is disordered. Positions 351 to 1353 (TTALQEALKE…CEAALNGNEE (1003 aa)) form a coiled coil. A CCHC-type zinc finger spans residues 1412 to 1429 (PYCDTCEMFGHWTADCND).

Its subcellular location is the cytoplasm. The protein resides in the cytoskeleton. The protein localises to the cytoplasmic vesicle membrane. It localises to the cell projection. It is found in the ruffle. Its function is as follows. Binds to the plus end of microtubules and regulates the dynamics of the microtubule cytoskeleton. Promotes microtubule growth and microtubule bundling. Links cytoplasmic vesicles to microtubules and thereby plays an important role in intracellular vesicle trafficking. Plays a role macropinocytosis and endosome trafficking. In Gallus gallus (Chicken), this protein is CAP-Gly domain-containing linker protein 1 (CLIP1).